The chain runs to 492 residues: N-succinylglutamate 5-semialdehyde dehydrogenase (492 aa).

G220 to G225 contacts NAD(+). Catalysis depends on residues E243 and C277.

The protein belongs to the aldehyde dehydrogenase family. AstD subfamily.

The catalysed reaction is N-succinyl-L-glutamate 5-semialdehyde + NAD(+) + H2O = N-succinyl-L-glutamate + NADH + 2 H(+). It functions in the pathway amino-acid degradation; L-arginine degradation via AST pathway; L-glutamate and succinate from L-arginine: step 4/5. Functionally, catalyzes the NAD-dependent reduction of succinylglutamate semialdehyde into succinylglutamate. This chain is N-succinylglutamate 5-semialdehyde dehydrogenase, found in Salmonella paratyphi B (strain ATCC BAA-1250 / SPB7).